The sequence spans 236 residues: Phosphoribosylaminoimidazole-succinocarboxamide synthase (236 aa).

It belongs to the SAICAR synthetase family.

It carries out the reaction 5-amino-1-(5-phospho-D-ribosyl)imidazole-4-carboxylate + L-aspartate + ATP = (2S)-2-[5-amino-1-(5-phospho-beta-D-ribosyl)imidazole-4-carboxamido]succinate + ADP + phosphate + 2 H(+). Its pathway is purine metabolism; IMP biosynthesis via de novo pathway; 5-amino-1-(5-phospho-D-ribosyl)imidazole-4-carboxamide from 5-amino-1-(5-phospho-D-ribosyl)imidazole-4-carboxylate: step 1/2. The protein is Phosphoribosylaminoimidazole-succinocarboxamide synthase of Coprothermobacter proteolyticus (strain ATCC 35245 / DSM 5265 / OCM 4 / BT).